The sequence spans 321 residues: Nucleus-vacuole junction protein 1 (321 aa).

The N-terminal stretch at 1–22 (MTRPPLVRGIFSLGLSVAVLKG) is a signal peptide. The tract at residues 73 to 125 (ELSWRKVFNFISRQSSELDTRIYVLILLLSFLLPIAWTVLDGDRETTLEDKDN) is TSC13-binding. A helical membrane pass occupies residues 94-114 (IYVLILLLSFLLPIAWTVLDG). The segment at 139-195 (KHYNDGERAVLQFGKNRSEPIILSYKDMNVLEGEHEFTSKEEHSNSHLTSKSENALN) is OSH1-binding. Phosphoserine is present on residues Ser156 and Ser199. The segment at 211 to 275 (LEEDKNEPNG…SLKSSTSFPI (65 aa)) is disordered. Positions 233 to 321 (DCSSSSEVES…EQAYSQPFRY (89 aa)) are VAC8-binding. Positions 242 to 262 (SQSKCRKESTAEPDSLSRDTR) are enriched in basic and acidic residues. The span at 263 to 272 (TTSSLKSSTS) shows a compositional bias: low complexity. A phosphoserine mark is found at Ser285 and Ser298. The disordered stretch occupies residues 299–321 (PTKSSNLDAQVNTEQAYSQPFRY).

Interacts with OSH1, TSC13 and VAC8.

Its subcellular location is the nucleus outer membrane. Functionally, involved in the formation of nucleus-vacuole junctions (NVJs) during piecemeal microautophagy of the nucleus (PMN). NVJs are interorganelle interfaces mediated by NVJ1 in the nuclear envelope and VAC8 on the vacuole membrane. Together, NVJ1 and VAC8 form Velcro-like patches through which teardrop-like portions of the nucleus are pinched off into the vacuolar lumen and degraded by the PMN process. Also acts as an outer-nuclear membrane receptor for OSH1 and TSC13. The polypeptide is Nucleus-vacuole junction protein 1 (NVJ1) (Saccharomyces cerevisiae (strain ATCC 204508 / S288c) (Baker's yeast)).